We begin with the raw amino-acid sequence, 235 residues long: MGDSQYSFSLTTFSPSGKLVQIEHALTAVGSGQTSLGIKASNGVVIATEKKLPSILVDEASVQKIQHLTPNIGTVYSGMGPDFRVLVRKSRKQAEQYLRLYKEPIPVTQLVRETATVMQEFTQSGGVRPFGVSLLVAGYDDKGPQLYQVDPSGSYFSWKASAMGKNVSNAKTFLEKRYTEDMELDDAIHTAILTLKEGFEGEISSKNIEIGKIGTDKVFRVLTPAEIDDYLAEVE.

Lys-64 is covalently cross-linked (Glycyl lysine isopeptide (Lys-Gly) (interchain with G-Cter in ubiquitin)).

This sequence belongs to the peptidase T1A family. Component of the 20S core complex of the 26S proteasome. The 26S proteasome is composed of a core protease (CP), known as the 20S proteasome, capped at one or both ends by the 19S regulatory particle (RP/PA700). The 20S proteasome core is composed of 28 subunits that are arranged in four stacked rings, resulting in a barrel-shaped structure. The two end rings are each formed by seven alpha subunits, and the two central rings are each formed by seven beta subunits. The catalytic chamber with the active sites is on the inside of the barrel.

The protein localises to the cytoplasm. Its subcellular location is the nucleus. Functionally, the proteasome is a multicatalytic proteinase complex which is characterized by its ability to cleave peptides with Arg, Phe, Tyr, Leu, and Glu adjacent to the leaving group at neutral or slightly basic pH. The proteasome has an ATP-dependent proteolytic activity. The chain is Proteasome subunit alpha type-2-B (PAB2) from Arabidopsis thaliana (Mouse-ear cress).